Reading from the N-terminus, the 566-residue chain is E3 ubiquitin-protein ligase RNF220 (566 aa).

Residue Lys-277 forms a Glycyl lysine isopeptide (Lys-Gly) (interchain with G-Cter in SUMO2) linkage. Residues Lys-277–His-297 form a disordered region. Ser-390 is subject to Phosphoserine. Residues Glu-485–Lys-513 are a coiled coil. The tract at residues Cys-514–Ser-522 is required for targeting to the cytoplasm. The segment at Cys-514–Asn-553 adopts an RING-type zinc-finger fold.

Interacts with SIN3B. Interacts with CTNNB1 (via Armadillo repeats 2-8). Interacts with USP7 (via MATH domain). Auto-ubiquitinated; leads to proteasomal degradation.

It localises to the cytoplasm. The protein localises to the nucleus. The enzyme catalyses S-ubiquitinyl-[E2 ubiquitin-conjugating enzyme]-L-cysteine + [acceptor protein]-L-lysine = [E2 ubiquitin-conjugating enzyme]-L-cysteine + N(6)-ubiquitinyl-[acceptor protein]-L-lysine.. The protein operates within protein modification; protein ubiquitination. In terms of biological role, E3 ubiquitin-protein ligase that promotes the ubiquitination and proteasomal degradation of SIN3B. Independently of its E3 ligase activity, acts as a CTNNB1 stabilizer through USP7-mediated deubiquitination of CTNNB1 and promotes Wnt signaling. Plays a critical role in the regulation of nuclear lamina. In Macaca fascicularis (Crab-eating macaque), this protein is E3 ubiquitin-protein ligase RNF220 (RNF220).